Reading from the N-terminus, the 1221-residue chain is MLRSTGFFRAIDCPYWSGAPGGPCRRPYCHFRHRGARGSGAPGDGGEAPPAAGLGYDPYNPELPKPPAQRENGTLGLGEEPRPDVLELELVNQAIEAVRSEVELEQRRYRELLETTREHRSAEAPALAPRGPNASPTVGPDEDAFPLAFDYSPGSHGLLSPDAGYQPTPLAAPAEPGSKYSLASLDRGQGRGGGGGGALEYVPKAVSQPRRHSRPVPSGKYVVDNSRPPTDLEYDPLSNYSARHLSRASSRDERAAKRPRGSRGSEPYTPAPKKLCDPFGSCDARFSDSEDEAATVPGNEPTTASTPKARADPEIKATGQPPSKEGLEAEGGGLRETKETAVQCDVGDLQPPPAKPASPAQVQSSQDGGCPKEGKPKKKKTGAPPAPSCKDGAQGKDKTKDKGRGRPVEKPRADKKGPQASSPRRKAERPEGTKKKPSSATPVATSGKGRPDRPARRPSPTSGDSRPAAGRGPPRPLQLPDRKSTKAPSGKLVERKARSLDEGASQDAPKLKKRALSHADLFGDESEDEAAGPGVPSVWPSALPSLSSDSDSDSDSSLGFPEAQGPPKRLKASPPPSPAPSSSSSSSSSTSSAGADVDYSALEKEVDFDSDPMEECLRIFNESTSVKTEDRGRLARQPPKEEKSEEKGLSGLTTLFPGQKRRISHLSKQGQEVEPPRRGPAVPPARPPTAQEVCYLRAQQAQRASASLLQAPARLAEKSPSVHISAPGEKRRIAHIPNPRLAAAPTGAKRTLAASGSQSSNGPEPGGQQLKTRTLSGMASKTTTTIIPKRIAHSPSLQSLKKPIIPKEFGGKVPTVIRQRYLNLFIEECLKFCTSNQEAIEKALNEEKVAYDRSPSKNIYLNVAVNTLKKLRGLAPSAVPGLSKTSGRRVVSHEVVLGGRLAAKTSFSLSRPSSPRVEDLKGAALYSRLREYLLTQDQLKENGYPFPHPERPGGAIIFTAEEKRPKDSSCRTCCRCGTEYLVSSSGRCIRDEECYYHWGRLRRNRVAGGWETQYMCCSAAAGSVGCQVAKQHVQDGRKERLEGFVKTFEKELSGDTHPGIYALDCEMSYTTYGLELTRVTVVDTDVHVVYDTFVKPDNEIVDYNTRFSGVTEADLADTSVTLRDVQAVLLSMFSADTILIGHSLESDLLALKVIHSTVVDTSVLFPHRLGLPYKRSLRNLMADYLRQIIQDNVDGHSSSEDAGACMHLVIWKVREDAKTKR.

The segment covering R37–G46 has biased composition (gly residues). A disordered region spans residues R37–L75. Residues L86–T115 adopt a coiled-coil conformation. The segment at T116 to D598 is disordered. R191 carries the post-translational modification Omega-N-methylarginine. 3 positions are modified to phosphoserine: S287, S289, and S358. Over residues A357–G369 the composition is skewed to low complexity. Over residues A393–G417 the composition is skewed to basic and acidic residues. Residues S459, S499, and S526 each carry the phosphoserine modification. Residues L492–D501 show a composition bias toward basic and acidic residues. The interval R498 to S577 is interaction with ELOA. A compositionally biased stretch (low complexity) spans P580–A593. S610 is subject to Phosphoserine. Disordered regions lie at residues I619–E692 and H735–L775. Residues K627–G648 show a composition bias toward basic and acidic residues. At S914 the chain carries Phosphoserine. An Exonuclease domain is found at I1060–V1209.

It belongs to the REXO1/REXO3 family. Interacts with TCEA2 and ELOA. Ubiquitously expressed.

The protein localises to the nucleus. Seems to have no detectable effect on transcription elongation in vitro. This is RNA exonuclease 1 homolog (REXO1) from Homo sapiens (Human).